The sequence spans 327 residues: Trypsin-like protease try-5 (327 aa).

The first 21 residues, 1 to 21 (MRPRIIVFLFQVLVVIKGTKL), serve as a signal peptide directing secretion. The region spanning 43–327 (AAGNTGNPTH…KFIVNFINQA (285 aa)) is the Peptidase S1 domain. Cysteines 73 and 89 form a disulfide. Catalysis depends on charge relay system residues His-88 and Asp-173. Residue Asn-207 is glycosylated (N-linked (GlcNAc...) asparagine). 2 disulfides stabilise this stretch: Cys-242–Cys-256 and Cys-266–Cys-296. Ser-270 acts as the Charge relay system in catalysis.

This sequence belongs to the peptidase S1 family. As to expression, specifically expressed in the male gonad including the seminal vesicle, the valve region and the vas deferens.

Its subcellular location is the secreted. The protein localises to the cytoplasmic vesicle. It is found in the secretory vesicle lumen. With respect to regulation, in the male gonad, probably maintained inactive by swm-1. In terms of biological role, serine protease which, in males, acts as a promoting signal during mating to activate sperm. The protein is Trypsin-like protease try-5 of Caenorhabditis elegans.